The following is a 296-amino-acid chain: tRNA pseudouridine synthase B (296 aa).

Asp-38 functions as the Nucleophile in the catalytic mechanism.

The protein belongs to the pseudouridine synthase TruB family. Type 1 subfamily.

It catalyses the reaction uridine(55) in tRNA = pseudouridine(55) in tRNA. In terms of biological role, responsible for synthesis of pseudouridine from uracil-55 in the psi GC loop of transfer RNAs. The polypeptide is tRNA pseudouridine synthase B (Ehrlichia ruminantium (strain Gardel)).